Reading from the N-terminus, the 347-residue chain is Pre-B-cell leukemia transcription factor 1 (347 aa).

The tract at residues 1-40 (MDDQPRLMHSHPGVGMAGHPSLSQHMQDGTGANEGEGGRK) is disordered. The region spanning 38 to 232 (GRKQDIGDIL…VMILRSRFLD (195 aa)) is the PBC domain. The tract at residues 45–124 (DILQQIMTIT…EGVAGPEKGG (80 aa)) is PBC-A. A PBC-B region spans residues 127–232 (AAAAAAAAAS…VMILRSRFLD (106 aa)). A DNA-binding region (homeobox; TALE-type) is located at residues 233-295 (ARRKRRNFNK…NKRIRYKKNI (63 aa)). A compositionally biased stretch (polar residues) spans 318–331 (VHGSQANSPSTPSS). Residues 318-347 (VHGSQANSPSTPSSAGGYPSPCYQSDRRIQ) form a disordered region.

Belongs to the TALE/PBX homeobox family. In terms of assembly, forms a heterodimer with meis1; the interaction is necessary for neural fate induction.

It is found in the nucleus. Functionally, acts as a transcriptional activator in complex with isoform 2 of meis1, to induce posterior neural and neural crest gene expression, and thereby specify hindbrain and neural crest cell fate. Binds to a highly conserved region in the promoter of the neural crest gene zic3. Required for the nuclear transport or retention of meis1. The protein is Pre-B-cell leukemia transcription factor 1 of Xenopus tropicalis (Western clawed frog).